We begin with the raw amino-acid sequence, 323 residues long: tRNA dimethylallyltransferase (323 aa).

An ATP-binding site is contributed by 16 to 23 (GPTASGKT). Residue 18–23 (TASGKT) participates in substrate binding. Interaction with substrate tRNA regions lie at residues 41–44 (DSAL), 165–169 (QRIQR), 253–258 (RCVGYR), and 286–293 (KRQITWLR).

The protein belongs to the IPP transferase family. As to quaternary structure, monomer. The cofactor is Mg(2+).

It catalyses the reaction adenosine(37) in tRNA + dimethylallyl diphosphate = N(6)-dimethylallyladenosine(37) in tRNA + diphosphate. In terms of biological role, catalyzes the transfer of a dimethylallyl group onto the adenine at position 37 in tRNAs that read codons beginning with uridine, leading to the formation of N6-(dimethylallyl)adenosine (i(6)A). This is tRNA dimethylallyltransferase from Ralstonia nicotianae (strain ATCC BAA-1114 / GMI1000) (Ralstonia solanacearum).